The sequence spans 535 residues: Genetic interactor of prohibitins 3, mitochondrial (535 aa).

The N-terminal 38 residues, 1–38 (MLPVSRLCVRSSLRKLVFVRFVSCTSCGVTLQNNNVRG), are a transit peptide targeting the mitochondrion. The region spanning 111 to 283 (MQEVYRHVPA…INDLPGYSTN (173 aa)) is the CP-type G domain.

Belongs to the TRAFAC class YlqF/YawG GTPase family. GEP3 subfamily.

The protein localises to the mitochondrion. In terms of biological role, may be involved in the mitochondrial lipid metabolism. The chain is Genetic interactor of prohibitins 3, mitochondrial (GEP3) from Lachancea thermotolerans (strain ATCC 56472 / CBS 6340 / NRRL Y-8284) (Yeast).